The primary structure comprises 99 residues: EPIDERMAL PATTERNING FACTOR-like protein 8 (99 aa).

Positions Met1–His35 are cleaved as a signal peptide. 3 disulfide bridges follow: Cys53/Cys90, Cys57/Cys63, and Cys60/Cys92.

The protein belongs to the plant cysteine rich small secretory peptide family. Epidermal patterning factor subfamily.

The protein localises to the secreted. Controls stomatal patterning. This Arabidopsis thaliana (Mouse-ear cress) protein is EPIDERMAL PATTERNING FACTOR-like protein 8.